The following is a 330-amino-acid chain: Aspartate--ammonia ligase (330 aa).

Belongs to the class-II aminoacyl-tRNA synthetase family. AsnA subfamily.

Its subcellular location is the cytoplasm. The catalysed reaction is L-aspartate + NH4(+) + ATP = L-asparagine + AMP + diphosphate + H(+). It participates in amino-acid biosynthesis; L-asparagine biosynthesis; L-asparagine from L-aspartate (ammonia route): step 1/1. This is Aspartate--ammonia ligase from Photorhabdus laumondii subsp. laumondii (strain DSM 15139 / CIP 105565 / TT01) (Photorhabdus luminescens subsp. laumondii).